The chain runs to 431 residues: Lipid storage droplets surface-binding protein 1 (431 aa).

The disordered stretch occupies residues K397–Y431. Positions N418–Y431 are enriched in polar residues.

It belongs to the perilipin family.

The protein resides in the cytoplasm. It is found in the lipid droplet. In terms of biological role, required for normal deposition of neutral lipids in the oocyte. The chain is Lipid storage droplets surface-binding protein 1 from Drosophila melanogaster (Fruit fly).